Consider the following 246-residue polypeptide: Large ribosomal subunit protein uL4 (246 aa).

The disordered stretch occupies residues 37-103 (AAQANRKQDY…TEKDRSLDLN (67 aa)). Positions 92-103 (PKTEKDRSLDLN) are enriched in basic and acidic residues.

Belongs to the universal ribosomal protein uL4 family. Part of the 50S ribosomal subunit. Interacts weakly with proteins L18e, L24 and L37e. Has been cross-linked to L18e.

Its function is as follows. One of the primary rRNA binding proteins, this protein initially binds near the 5'-end of the 23S rRNA. It is important during the early stages of 50S assembly. Makes multiple contacts with different domains of the 23S rRNA in the assembled 50S subunit. In terms of biological role, forms part of the polypeptide exit tunnel, in which it helps forms a bend with protein L22. Contacts the macrolide antibiotic spiramycin in the polypeptide exit tunnel. This chain is Large ribosomal subunit protein uL4 (rpl4), found in Haloarcula marismortui (strain ATCC 43049 / DSM 3752 / JCM 8966 / VKM B-1809) (Halobacterium marismortui).